Reading from the N-terminus, the 308-residue chain is ATP synthase gamma chain (308 aa).

The protein belongs to the ATPase gamma chain family. F-type ATPases have 2 components, CF(1) - the catalytic core - and CF(0) - the membrane proton channel. CF(1) has five subunits: alpha(3), beta(3), gamma(1), delta(1), epsilon(1). CF(0) has three main subunits: a, b and c.

The protein resides in the cell inner membrane. Produces ATP from ADP in the presence of a proton gradient across the membrane. The gamma chain is believed to be important in regulating ATPase activity and the flow of protons through the CF(0) complex. This Salinibacter ruber (strain DSM 13855 / M31) protein is ATP synthase gamma chain.